The primary structure comprises 397 residues: Aromatic-amino-acid aminotransferase (397 aa).

Residues Gly-34, Tyr-66, Trp-131, and Asn-184 each coordinate substrate. Lys-247 is subject to N6-(pyridoxal phosphate)lysine. Positions 281 and 375 each coordinate substrate.

Belongs to the class-I pyridoxal-phosphate-dependent aminotransferase family. As to quaternary structure, homodimer. It depends on pyridoxal 5'-phosphate as a cofactor.

The protein resides in the cytoplasm. It catalyses the reaction an aromatic L-alpha-amino acid + 2-oxoglutarate = an aromatic oxo-acid + L-glutamate. The enzyme catalyses (3S)-3-methyl-L-phenylalanine + 2-oxoglutarate = (3S)-2-oxo-3-phenylbutanoate + L-glutamate. The protein operates within amino-acid biosynthesis; L-phenylalanine biosynthesis; L-phenylalanine from phenylpyruvate (ArAT route): step 1/1. Its pathway is amino-acid biosynthesis; L-tyrosine biosynthesis; L-tyrosine from (4-hydroxyphenyl)pyruvate: step 1/1. Broad-specificity enzyme that catalyzes the transamination of 2-ketoisocaproate, p-hydroxyphenylpyruvate, and phenylpyruvate to yield leucine, tyrosine, and phenylalanine, respectively. In vitro, is able to catalyze the conversion of beta-methyl phenylpyruvate to the nonproteinogenic amino acid (2S,3S)-beta-methyl-phenylalanine, a building block of the antibiotic mannopeptimycin produced by Streptomyces hygroscopicus NRRL3085. In Escherichia coli (strain K12), this protein is Aromatic-amino-acid aminotransferase (tyrB).